Here is a 459-residue protein sequence, read N- to C-terminus: MIGDDIAAISTAPGEGGIAIVRLSGNDVIEKVERIFKPYRAGIKLSDKEGYSLSLGWLCDEKMEIIDEVLLGLMRAPRSYTGEDVVEINCHGGTLPARRCLEAVMWQGVRLAQPGEFTRRAFLNGRLDVSQAEAVIEVIRAKTERGMNLALKQLAGRNSQEINLLEDQMIEVNAMLEASLDFPDEVGDLDYSAAQGKLQEVKNRIDKLLLAGERAEIYREGINVAICGKPNVGKSSLLNALLRKEKAIVTSIPGTTRDIIEDYINIRGIPVKLKDTAGIRSTEDLVERIGIERSQEVISEADLVLFILDVGTGIDQEDRKIYEKIEKKNKIVLVNKEDLEEKNISEAELEQLFPGVKIVRGSIIEETGLEELEESIEKAVLSGQLQSDDMEVMINLRQKNALLTAKRHIEESLAAMGKVSLDCLGVDIWGALEALGEISGKNLKEEVIERIFHDFCIGK.

Residues R22, E87, and R126 each contribute to the (6S)-5-formyl-5,6,7,8-tetrahydrofolate site. Residues G221–L381 enclose the TrmE-type G domain. Residue N231 coordinates K(+). Residues N231 to S236, T250 to T256, and D275 to G278 each bind GTP. S235 is a Mg(2+) binding site. K(+) is bound by residues T250, I252, and T255. Residue T256 coordinates Mg(2+). Residue K459 participates in (6S)-5-formyl-5,6,7,8-tetrahydrofolate binding.

It belongs to the TRAFAC class TrmE-Era-EngA-EngB-Septin-like GTPase superfamily. TrmE GTPase family. As to quaternary structure, homodimer. Heterotetramer of two MnmE and two MnmG subunits. Requires K(+) as cofactor.

The protein localises to the cytoplasm. In terms of biological role, exhibits a very high intrinsic GTPase hydrolysis rate. Involved in the addition of a carboxymethylaminomethyl (cmnm) group at the wobble position (U34) of certain tRNAs, forming tRNA-cmnm(5)s(2)U34. This is tRNA modification GTPase MnmE from Syntrophomonas wolfei subsp. wolfei (strain DSM 2245B / Goettingen).